A 98-amino-acid polypeptide reads, in one-letter code: MKVTDVRIRKVAAEGKMKAIVSVTFDEEFVVHDIKIIEGQNGLFIAMPSRKMGEGDFRDIAHPINSDTRSKIQDAIFAEYAIMNEEVQVQVQVTEEAL.

It belongs to the SpoVG family.

Its function is as follows. Could be involved in septation. The chain is Putative septation protein SpoVG from Alkaliphilus metalliredigens (strain QYMF).